The primary structure comprises 116 residues: Large ribosomal subunit protein uL24 (116 aa).

Belongs to the universal ribosomal protein uL24 family. Part of the 50S ribosomal subunit.

One of two assembly initiator proteins, it binds directly to the 5'-end of the 23S rRNA, where it nucleates assembly of the 50S subunit. Functionally, located at the polypeptide exit tunnel on the outside of the subunit. The chain is Large ribosomal subunit protein uL24 from Methanothrix thermoacetophila (strain DSM 6194 / JCM 14653 / NBRC 101360 / PT) (Methanosaeta thermophila).